Reading from the N-terminus, the 303-residue chain is Probable 5-dehydro-4-deoxyglucarate dehydratase (303 aa).

The protein belongs to the DapA family.

The enzyme catalyses 5-dehydro-4-deoxy-D-glucarate + H(+) = 2,5-dioxopentanoate + CO2 + H2O. It functions in the pathway carbohydrate acid metabolism; D-glucarate degradation; 2,5-dioxopentanoate from D-glucarate: step 2/2. This chain is Probable 5-dehydro-4-deoxyglucarate dehydratase, found in Variovorax paradoxus (strain S110).